The primary structure comprises 278 residues: HTH-type transcriptional activator RhaS (278 aa).

An HTH araC/xylS-type domain is found at 174 to 272; the sequence is NLLLAWLEDH…NWSPRDIRQG (99 aa). 2 consecutive DNA-binding regions (H-T-H motif) follow at residues 191–212 and 239–262; these read DAVAEQFSLSLRTLHRQLKQQT and VTDIAYRCGFSDSNHFSTLFRREF.

As to quaternary structure, binds DNA as a dimer.

Its subcellular location is the cytoplasm. In terms of biological role, activates expression of the rhaBAD and rhaT operons. In Escherichia coli (strain SE11), this protein is HTH-type transcriptional activator RhaS.